A 768-amino-acid chain; its full sequence is P-selectin (768 aa).

The first 41 residues, 1-41 (MAGCPKGSWKPRLRSVVLGAAQLIWLSALISELVNRKKVAT), serve as a signal peptide directing secretion. Residues 42-709 (WTYNYSTKAY…QAGTLTIQEA (668 aa)) are Extracellular-facing. 3 N-linked (GlcNAc...) asparagine glycosylation sites follow: Asn45, Asn54, and Asn107. The C-type lectin domain maps to 58 to 158 (AFCKRHFTDL…PCFKRKRALC (101 aa)). 20 disulfides stabilise this stretch: Cys60–Cys158, Cys131–Cys150, Cys168–Cys183, Cys185–Cys194, Cys200–Cys244, Cys230–Cys257, Cys262–Cys306, Cys292–Cys319, Cys324–Cys368, Cys354–Cys381, Cys386–Cys430, Cys416–Cys443, Cys448–Cys492, Cys478–Cys505, Cys510–Cys554, Cys540–Cys567, Cys580–Cys624, Cys610–Cys637, Cys642–Cys686, and Cys672–Cys699. Ca(2+) is bound by residues Glu121, Asn123, and Asn124. Asn123 contacts a carbohydrate. A carbohydrate is bound by residues Glu133 and Asn146. Positions 146 and 147 each coordinate Ca(2+). The EGF-like domain maps to 159-195 (YTASCQDMSCNSQGERIETIGSYTCSCYPGFYGPECE). Sushi domains follow at residues 198–259 (QECG…QCKA), 260–321 (VQCQ…TCEA), 322–383 (IACE…VCEA), 384–445 (LQCQ…ECQA), 446–507 (VSCT…MCEA), 508–569 (IKCP…TCKG), 578–639 (VRCP…VCRA), and 640–701 (VKCS…TCQA). An N-linked (GlcNAc...) asparagine glycan is attached at Asn212. Asn347 carries N-linked (GlcNAc...) asparagine glycosylation. N-linked (GlcNAc...) asparagine glycosylation is present at Asn456. A glycan (N-linked (GlcNAc...) asparagine) is linked at Asn603. Residues Asn654, Asn661, and Asn679 are each glycosylated (N-linked (GlcNAc...) asparagine). The helical transmembrane segment at 710 to 733 (LTYLGGALASTSGLAVGGTLLALL) threads the bilayer. Residues 734 to 768 (RKRLRKKDDGKCPLNPHSHLGTYGVFTNAAYDPTP) lie on the Cytoplasmic side of the membrane. Cys745 is lipidated: S-palmitoyl cysteine; alternate. Cys745 carries S-stearoyl cysteine; alternate lipidation. Positions 756-759 (YGVF) match the Endocytosis signal motif. The segment at 759–768 (FTNAAYDPTP) is interaction with SNX17.

This sequence belongs to the selectin/LECAM family. Interacts with SNX17. Interacts with SELPLG/PSGL1 and PODXL2 and mediates neutrophil adhesion and leukocyte rolling. This interaction requires the sialyl-Lewis X epitope of SELPLG and PODXL2, and specific tyrosine sulfation on SELPLG. Interacts (via C-type lectin domain) with alpha-IIb/beta3 integrin ITGA2B:ITGB3 and alpha-V/beta-3 integrin ITGAV:ITGB3. Interacts with alpha5/beta1 integrin ITGA5:ITGB1 and alpha4/beta1 integrin ITGA4:ITGB. As to expression, not detected in the absence of exposure to lipopolysaccharide (LPS). Detected only after exposure to lipopolysaccharide (LPS) in the tissues examined: spleen, lung, brain, liver, heart, kidney, thymus and small intestine.

The protein resides in the cell membrane. Ca(2+)-dependent receptor for myeloid cells that binds to carbohydrates on neutrophils and monocytes. Mediates the interaction of activated endothelial cells or platelets with leukocytes. The ligand recognized is sialyl-Lewis X. Mediates rapid rolling of leukocyte rolling over vascular surfaces during the initial steps in inflammation through interaction with SELPLG. Mediates cell-cell interactions and cell adhesion via the interaction with integrin alpha-IIb/beta3 (ITGA2B:ITGB3) and integrin alpha-V/beta-3 (ITGAV:ITGB3). In Rattus norvegicus (Rat), this protein is P-selectin (Selp).